A 411-amino-acid chain; its full sequence is Carbohydrate sulfotransferase 1 (411 aa).

Residue methionine 1 is a topological domain, cytoplasmic. Residues 2–23 (QCSWKAVLLLALASIAIQYTAI) traverse the membrane as a helical; Signal-anchor for type II membrane protein segment. The Lumenal segment spans residues 24–411 (RTFTAKSFHT…VEERDFRPFL (388 aa)). Asparagine 56 carries N-linked (GlcNAc...) asparagine glycosylation. 3'-phosphoadenylyl sulfate is bound at residue 69–75 (TRSGSSF). Asparagine 145 and asparagine 189 each carry an N-linked (GlcNAc...) asparagine glycan. 234–242 (RDPRGILAS) is a binding site for 3'-phosphoadenylyl sulfate. Residue asparagine 334 is glycosylated (N-linked (GlcNAc...) asparagine). The Cell attachment site motif lies at 337-339 (RGD).

Belongs to the sulfotransferase 1 family. Gal/GlcNAc/GalNAc subfamily.

The protein resides in the golgi apparatus membrane. It catalyses the reaction 3'-phosphoadenylyl sulfate + keratan = adenosine 3',5'-bisphosphate + keratan 6'-sulfate.. It functions in the pathway glycan metabolism. In terms of biological role, sulfotransferase that utilizes 3'-phospho-5'-adenylyl sulfate (PAPS) as sulfonate donor to catalyze the transfer of sulfate to position 6 of internal galactose (Gal) residues of keratan. Cooperates with B4GALT4 and B3GNT7 glycosyltransferases and CHST6 sulfotransferase to construct and elongate disulfated disaccharide unit [-&gt;3(6-sulfoGalbeta)1-&gt;4(6-sulfoGlcNAcbeta)1-&gt;] within keratan sulfate polymer. Has a preference for sulfating keratan sulfate, but it also transfers sulfate to the unsulfated polymer. Involved in biosynthesis of phosphacan, a major keratan sulfate proteoglycan in the developing brain. Involved in biosynthesis of 6-sulfoGalbeta-containing O-linked glycans in high endothelial venules of lymph nodes. May act in a synergistic manner with CHST4 to generate sialyl 6',6-disulfo Lewis X motif, a recognition determinant for immune cell receptors implicated in leukocyte trafficking. Catalyzes sulfation of N-acetyllactosamine (LacNAc) oligosaccharides with highest efficiency for sialylated LacNAc structures. The protein is Carbohydrate sulfotransferase 1 (Chst1) of Rattus norvegicus (Rat).